Here is a 481-residue protein sequence, read N- to C-terminus: GDP-fucose protein O-fucosyltransferase 2 (481 aa).

The first 22 residues, 1-22, serve as a signal peptide directing secretion; it reads MKGRAHIWVALLLACLPPRFRN. GDP-beta-L-fucose-binding positions include 59 to 63, 287 to 289, aspartate 365, and 382 to 383; these read GEGFN, HLR, and RF. Glutamate 60 acts as the Proton acceptor in catalysis.

This sequence belongs to the glycosyltransferase 68 family.

It localises to the endoplasmic reticulum. The enzyme catalyses L-seryl-[protein] + GDP-beta-L-fucose = 3-O-(alpha-L-fucosyl)-L-seryl-[protein] + GDP + H(+). It catalyses the reaction L-threonyl-[protein] + GDP-beta-L-fucose = 3-O-(alpha-L-fucosyl)-L-threonyl-[protein] + GDP + H(+). It functions in the pathway protein modification; protein glycosylation. Catalyzes the reaction that attaches fucose through an O-glycosidic linkage to a conserved serine or threonine residue in the consensus sequence C1-X-X-S/T-C2 of thrombospondin type I repeats (TSRs) where C1 and C2 are the first and second cysteines of the repeat, respectively. O-fucosylates sporozoite proteins CSP and TRAP. O-fucosylation regulates stability and intracellular trafficking of TRAP but not of CSP. Probably by regulating protein O-fucosylation, may play a role in parasite transmission to the mosquito vector and/or infection of the vertebrate host hepatocytes; however, POFUT2 involvement in transmission/infection is controversial. The protein is GDP-fucose protein O-fucosyltransferase 2 of Plasmodium vivax (strain Salvador I).